A 427-amino-acid polypeptide reads, in one-letter code: Glutamate-1-semialdehyde 2,1-aminomutase (427 aa).

An N6-(pyridoxal phosphate)lysine modification is found at Lys265.

The protein belongs to the class-III pyridoxal-phosphate-dependent aminotransferase family. HemL subfamily. Homodimer. It depends on pyridoxal 5'-phosphate as a cofactor.

Its subcellular location is the cytoplasm. It catalyses the reaction (S)-4-amino-5-oxopentanoate = 5-aminolevulinate. It participates in porphyrin-containing compound metabolism; protoporphyrin-IX biosynthesis; 5-aminolevulinate from L-glutamyl-tRNA(Glu): step 2/2. The sequence is that of Glutamate-1-semialdehyde 2,1-aminomutase from Burkholderia ambifaria (strain ATCC BAA-244 / DSM 16087 / CCUG 44356 / LMG 19182 / AMMD) (Burkholderia cepacia (strain AMMD)).